Here is a 345-residue protein sequence, read N- to C-terminus: tRNA N6-adenosine threonylcarbamoyltransferase (345 aa).

2 residues coordinate Fe cation: His-111 and His-115. Substrate-binding positions include 134 to 138 (LVSGG), Asp-167, Gly-180, and Asn-276. Fe cation is bound at residue Asp-304.

The protein belongs to the KAE1 / TsaD family. Requires Fe(2+) as cofactor.

The protein localises to the cytoplasm. It catalyses the reaction L-threonylcarbamoyladenylate + adenosine(37) in tRNA = N(6)-L-threonylcarbamoyladenosine(37) in tRNA + AMP + H(+). Its function is as follows. Required for the formation of a threonylcarbamoyl group on adenosine at position 37 (t(6)A37) in tRNAs that read codons beginning with adenine. Is involved in the transfer of the threonylcarbamoyl moiety of threonylcarbamoyl-AMP (TC-AMP) to the N6 group of A37, together with TsaE and TsaB. TsaD likely plays a direct catalytic role in this reaction. In Bordetella avium (strain 197N), this protein is tRNA N6-adenosine threonylcarbamoyltransferase.